Reading from the N-terminus, the 223-residue chain is Phosphoribosylformylglycinamidine synthase subunit PurQ (223 aa).

The 221-residue stretch at 3–223 folds into the Glutamine amidotransferase type-1 domain; it reads SAVILLPGLN…LFAGALGITA (221 aa). Cysteine 87 serves as the catalytic Nucleophile. Active-site residues include histidine 197 and glutamate 199.

In terms of assembly, part of the FGAM synthase complex composed of 1 PurL, 1 PurQ and 2 PurS subunits.

The protein localises to the cytoplasm. The enzyme catalyses N(2)-formyl-N(1)-(5-phospho-beta-D-ribosyl)glycinamide + L-glutamine + ATP + H2O = 2-formamido-N(1)-(5-O-phospho-beta-D-ribosyl)acetamidine + L-glutamate + ADP + phosphate + H(+). It carries out the reaction L-glutamine + H2O = L-glutamate + NH4(+). It participates in purine metabolism; IMP biosynthesis via de novo pathway; 5-amino-1-(5-phospho-D-ribosyl)imidazole from N(2)-formyl-N(1)-(5-phospho-D-ribosyl)glycinamide: step 1/2. Its function is as follows. Part of the phosphoribosylformylglycinamidine synthase complex involved in the purines biosynthetic pathway. Catalyzes the ATP-dependent conversion of formylglycinamide ribonucleotide (FGAR) and glutamine to yield formylglycinamidine ribonucleotide (FGAM) and glutamate. The FGAM synthase complex is composed of three subunits. PurQ produces an ammonia molecule by converting glutamine to glutamate. PurL transfers the ammonia molecule to FGAR to form FGAM in an ATP-dependent manner. PurS interacts with PurQ and PurL and is thought to assist in the transfer of the ammonia molecule from PurQ to PurL. The chain is Phosphoribosylformylglycinamidine synthase subunit PurQ from Brucella suis biovar 1 (strain 1330).